Reading from the N-terminus, the 296-residue chain is uncharacterized protein (296 aa).

A signal peptide spans Met1 to Ala20.

This is an uncharacterized protein from Escherichia coli (strain K12).